The sequence spans 465 residues: Keratin, type I cytoskeletal 13 (465 aa).

Residues Met1–Lys28 are compositionally biased toward polar residues. The segment at Met1–Ser47 is disordered. The head stretch occupies residues Met1–Thr98. Residues Ser99–Trp135 are coil 1A. An IF rod domain is found at Gly100 to Phe412. A linker 1 region spans residues Tyr136–Ile154. The segment at Ile155–Leu246 is coil 1B. The segment at Arg247–Lys269 is linker 12. The coil 2 stretch occupies residues Leu270–Asp408. The interval Glu409–Ile465 is tail.

The protein belongs to the intermediate filament family. In terms of assembly, heterotetramer of two type I and two type II keratins. As to expression, expressed in skin.

Its function is as follows. Type 1 keratin. May maintain oral mucosal cell homeostasis and tissue organization in response to mechanical stress. The protein is Keratin, type I cytoskeletal 13 (KRT13) of Protopterus aethiopicus (Marbled lungfish).